The following is a 238-amino-acid chain: Ribonuclease PH (238 aa).

Residues R86 and 124–126 contribute to the phosphate site; that span reads GTR.

Belongs to the RNase PH family. As to quaternary structure, homohexameric ring arranged as a trimer of dimers.

The enzyme catalyses tRNA(n+1) + phosphate = tRNA(n) + a ribonucleoside 5'-diphosphate. Phosphorolytic 3'-5' exoribonuclease that plays an important role in tRNA 3'-end maturation. Removes nucleotide residues following the 3'-CCA terminus of tRNAs; can also add nucleotides to the ends of RNA molecules by using nucleoside diphosphates as substrates, but this may not be physiologically important. Probably plays a role in initiation of 16S rRNA degradation (leading to ribosome degradation) during starvation. In Pasteurella multocida (strain Pm70), this protein is Ribonuclease PH.